Reading from the N-terminus, the 110-residue chain is Large ribosomal subunit protein P1B (110 aa).

The segment covering 69–85 has biased composition (low complexity); the sequence is PAAGGAGAPAAAAGGEA. A disordered region spans residues 69–110; sequence PAAGGAGAPAAAAGGEAAAEEQKEEAKEEEESDEDMGFGLFD. Acidic residues predominate over residues 95–104; that stretch reads KEEEESDEDM.

Belongs to the eukaryotic ribosomal protein P1/P2 family. As to quaternary structure, component of the large ribosomal subunit (LSU). Mature yeast ribosomes consist of a small (40S) and a large (60S) subunit. The 40S small subunit contains 1 molecule of ribosomal RNA (18S rRNA) and at least 33 different proteins. The large 60S subunit contains 3 rRNA molecules (25S, 5.8S and 5S rRNA) and at least 46 different proteins. The acidic ribosomal P-proteins form the stalk structure of the 60S subunit. They are organized as a pentameric complex in which uL10/P0 interacts with 2 heterodimers of P1 and P2 proteins.

The protein localises to the cytoplasm. Its function is as follows. Component of the ribosome, a large ribonucleoprotein complex responsible for the synthesis of proteins in the cell. The small ribosomal subunit (SSU) binds messenger RNAs (mRNAs) and translates the encoded message by selecting cognate aminoacyl-transfer RNA (tRNA) molecules. The large subunit (LSU) contains the ribosomal catalytic site termed the peptidyl transferase center (PTC), which catalyzes the formation of peptide bonds, thereby polymerizing the amino acids delivered by tRNAs into a polypeptide chain. The nascent polypeptides leave the ribosome through a tunnel in the LSU and interact with protein factors that function in enzymatic processing, targeting, and the membrane insertion of nascent chains at the exit of the ribosomal tunnel. This chain is Large ribosomal subunit protein P1B (rpp102), found in Schizosaccharomyces pombe (strain 972 / ATCC 24843) (Fission yeast).